A 20-amino-acid chain; its full sequence is 21 kDa cold shock-induced protein (20 aa).

The span at 1 to 12 (TDSIKETIKETV) shows a compositional bias: basic and acidic residues. A disordered region spans residues 1–20 (TDSIKETIKETVNHQAEWPY).

The polypeptide is 21 kDa cold shock-induced protein (Streptococcus thermophilus).